The following is a 107-amino-acid chain: Replication initiation control protein YabA (107 aa).

Zn(2+) contacts are provided by His81, Cys83, Cys97, and Cys100.

Belongs to the YabA family. In terms of assembly, homotetramer. Interacts with both DnaA and DnaN, acting as a bridge between these two proteins. It depends on Zn(2+) as a cofactor.

It is found in the cytoplasm. It localises to the nucleoid. In terms of biological role, involved in control of chromosome replication initiation. Inhibits the cooperative binding of DnaA to the oriC region, thus negatively regulating initiation of chromosome replication. Inhibits the ability of DnaA-ATP to form a helix on DNA; does not disassemble preformed DnaA-DNA helices. Decreases the residence time of DnaA on the chromosome at its binding sites (oriC, replication forks and promoter-binding sites). Tethers DnaA to the replication machinery via the DNA polymerase beta sliding clamp subunit (dnaN). Associates with oriC and other DnaA targets on the chromosome in a DnaA-dependent manner. The polypeptide is Replication initiation control protein YabA (Streptococcus pyogenes serotype M3 (strain ATCC BAA-595 / MGAS315)).